Here is a 228-residue protein sequence, read N- to C-terminus: UPF0758 protein CLD_1541 (228 aa).

An MPN domain is found at 106 to 228; the sequence is KINTPLDVSN…YVSMKEKGTI (123 aa). Zn(2+) is bound by residues His-177, His-179, and Asp-190. The JAMM motif motif lies at 177–190; it reads HNHPSGDPTPSKED.

This sequence belongs to the UPF0758 family.

The polypeptide is UPF0758 protein CLD_1541 (Clostridium botulinum (strain Okra / Type B1)).